The primary structure comprises 124 residues: Glutaredoxin-2 (124 aa).

A disulfide bond links cysteine 13 and cysteine 16.

Belongs to the glutaredoxin family. In terms of assembly, homodimer.

The protein localises to the host cytoplasm. In terms of biological role, glutaredoxin necessary for virion morphogenesis and virus replication. Functions as a thiol-disulfide transfer protein between membrane-associated OPG128 and substrates OPG095 or OPG053. The complete pathway for formation of disulfide bonds in intracellular virion membrane proteins sequentially involves oxidation of OPG072, OPG128 and OPG088. Exhibit thioltransferase and dehydroascorbate reductase activities in vitro. This chain is Glutaredoxin-2 (OPG088), found in Bos taurus (Bovine).